The chain runs to 95 residues: Aspartyl/glutamyl-tRNA(Asn/Gln) amidotransferase subunit C (95 aa).

Belongs to the GatC family. In terms of assembly, heterotrimer of A, B and C subunits.

The enzyme catalyses L-glutamyl-tRNA(Gln) + L-glutamine + ATP + H2O = L-glutaminyl-tRNA(Gln) + L-glutamate + ADP + phosphate + H(+). It catalyses the reaction L-aspartyl-tRNA(Asn) + L-glutamine + ATP + H2O = L-asparaginyl-tRNA(Asn) + L-glutamate + ADP + phosphate + 2 H(+). Allows the formation of correctly charged Asn-tRNA(Asn) or Gln-tRNA(Gln) through the transamidation of misacylated Asp-tRNA(Asn) or Glu-tRNA(Gln) in organisms which lack either or both of asparaginyl-tRNA or glutaminyl-tRNA synthetases. The reaction takes place in the presence of glutamine and ATP through an activated phospho-Asp-tRNA(Asn) or phospho-Glu-tRNA(Gln). In Clostridium botulinum (strain 657 / Type Ba4), this protein is Aspartyl/glutamyl-tRNA(Asn/Gln) amidotransferase subunit C.